We begin with the raw amino-acid sequence, 684 residues long: Protein real-time (684 aa).

The 177-residue stretch at 2-178 (VQKYESPVRI…FVNELKQEGI (177 aa)) folds into the PRELI/MSF1 domain. One can recognise a CRAL-TRIO domain in the interval 297–474 (TPAVVEKYFP…FLGGSCNVID (178 aa)). Residues 537–684 (HHGLYKAVDL…GFSSNSLQSR (148 aa)) form the GOLD domain.

The protein resides in the mitochondrion. This chain is Protein real-time, found in Anopheles gambiae (African malaria mosquito).